A 60-amino-acid polypeptide reads, in one-letter code: uncharacterized protein (60 aa).

Residues 27-49 (YYWLVSTARMVLGVTILILILIG) form a helical membrane-spanning segment.

Its subcellular location is the membrane. This is an uncharacterized protein from Archaeoglobus fulgidus (strain ATCC 49558 / DSM 4304 / JCM 9628 / NBRC 100126 / VC-16).